The following is a 71-amino-acid chain: Long neurotoxin 3 (71 aa).

5 disulfide bridges follow: C3-C20, C14-C41, C26-C30, C45-C56, and C57-C62.

The protein belongs to the three-finger toxin family. Long-chain subfamily. Type II alpha-neurotoxin sub-subfamily. As to expression, expressed by the venom gland.

It is found in the secreted. In terms of biological role, binds with high affinity to muscular (alpha-1/CHRNA1) and neuronal (alpha-7/CHRNA7) nicotinic acetylcholine receptor (nAChR) and inhibits acetylcholine from binding to the receptor, thereby impairing neuromuscular and neuronal transmission. In Naja naja (Indian cobra), this protein is Long neurotoxin 3.